The following is a 347-amino-acid chain: Quinolinate synthase (347 aa).

The iminosuccinate site is built by His47 and Ser68. Cys113 provides a ligand contact to [4Fe-4S] cluster. Iminosuccinate is bound by residues 139-141 (YAN) and Ser156. [4Fe-4S] cluster is bound at residue Cys200. Iminosuccinate is bound by residues 226-228 (HPE) and Thr243. Cys297 provides a ligand contact to [4Fe-4S] cluster.

Belongs to the quinolinate synthase family. Type 1 subfamily. Requires [4Fe-4S] cluster as cofactor.

Its subcellular location is the cytoplasm. The enzyme catalyses iminosuccinate + dihydroxyacetone phosphate = quinolinate + phosphate + 2 H2O + H(+). It functions in the pathway cofactor biosynthesis; NAD(+) biosynthesis; quinolinate from iminoaspartate: step 1/1. Catalyzes the condensation of iminoaspartate with dihydroxyacetone phosphate to form quinolinate. This Salmonella agona (strain SL483) protein is Quinolinate synthase.